Here is a 623-residue protein sequence, read N- to C-terminus: Keratin, type I cytoskeletal 9 (623 aa).

Positions 1–13 (MSCRQFSSSYLSR) are enriched in low complexity. Positions 1–25 (MSCRQFSSSYLSRSGGGGGGGLGSG) are disordered. The head stretch occupies residues 1 to 152 (MSCRQFSSSY…GGDGGILTAN (152 aa)). Phosphoserine occurs at positions 14 and 57. A compositionally biased stretch (gly residues) spans 14–25 (SGGGGGGGLGSG). A coil 1A region spans residues 153–188 (EKSTMQELNSRLASYLDKVQALEEANNDLENKIQDW). An IF rod domain is found at 153–465 (EKSTMQELNS…NLLEGGQEDF (313 aa)). Residues 189-207 (YDKKGPAAIQKNYSPYYNT) form a linker 1 region. Residues 208-299 (IDDLKDQIVD…KNHKEEMSQL (92 aa)) are coil 1B. Residues 300–322 (TGQNSGDVNVEINVAPGKDLTKT) are linker 12. The interval 323-461 (LNDMRQEYEQ…ETYHNLLEGG (139 aa)) is coil 2. 2 disordered regions span residues 462–496 (QEDF…SGGS) and 534–623 (YGGG…SSHS). Positions 462–623 (QEDFESSGAG…GGGSGKSSHS (162 aa)) are tail. The span at 471-496 (GKIGLGGRGGSGGSYGRGSRGGSGGS) shows a compositional bias: gly residues.

It belongs to the intermediate filament family. Heterotetramer of two type I and two type II keratins. Expressed in the terminally differentiated epidermis of palms and soles.

Its function is as follows. May serve an important special function either in the mature palmar and plantar skin tissue or in the morphogenetic program of the formation of these tissues. Plays a role in keratin filament assembly. The chain is Keratin, type I cytoskeletal 9 (KRT9) from Homo sapiens (Human).